The sequence spans 332 residues: Glyceraldehyde-3-phosphate dehydrogenase 2 (332 aa).

Residues R11, I12, and D33 each coordinate NAD(+). Residues K46 and K63 each participate in a glycyl lysine isopeptide (Lys-Gly) (interchain with G-Cter in ubiquitin) cross-link. T120 lines the NAD(+) pocket. D-glyceraldehyde 3-phosphate-binding positions include 149 to 151 (SCT), T180, 209 to 210 (TG), and R232. Residue C150 is the Nucleophile of the active site. S302 carries the post-translational modification Phosphoserine. N314 and Y318 together coordinate NAD(+).

The protein belongs to the glyceraldehyde-3-phosphate dehydrogenase family. As to quaternary structure, homotetramer.

It is found in the cytoplasm. The catalysed reaction is D-glyceraldehyde 3-phosphate + phosphate + NAD(+) = (2R)-3-phospho-glyceroyl phosphate + NADH + H(+). It carries out the reaction NADH + H2O = (6R)-NADHX. The enzyme catalyses NADH + H2O = (6S)-NADHX. It catalyses the reaction NADPH + H2O = (6R)-NADPHX. The catalysed reaction is NADPH + H2O = (6S)-NADPHX. The protein operates within carbohydrate degradation; glycolysis; pyruvate from D-glyceraldehyde 3-phosphate: step 1/5. Its function is as follows. Glyceraldehyde-3-phosphate dehydrogenase (GAPDH) involved in glycolysis and gluconeogenesis. Catalyzes the reaction of glyceraldehyde-3-phosphate to 1,3 bis-phosphoglycerate. The contribution of the TDH1, TDH2, and TDH3 to the total glyceraldehyde-3-phosphate dehydrogenase activity is 10-15, 25-30, and 50-60%, respectively. As a side activity, catalyzes the hydration of the nicotinamide ring of NADH or NADPH at the C6 position to give the corresponding hydrates, NADHX and NADPHX, which exist as R and S epimers, that cannot act as electron donors or acceptors and inhibit several dehydrogenases, making them toxic. In Saccharomyces cerevisiae (strain ATCC 204508 / S288c) (Baker's yeast), this protein is Glyceraldehyde-3-phosphate dehydrogenase 2.